Reading from the N-terminus, the 426-residue chain is Enolase (426 aa).

Position 163 (Q163) interacts with (2R)-2-phosphoglycerate. The active-site Proton donor is E205. Residues D242, E286, and D313 each coordinate Mg(2+). 4 residues coordinate (2R)-2-phosphoglycerate: K338, R367, S368, and K389. K338 functions as the Proton acceptor in the catalytic mechanism.

It belongs to the enolase family. Mg(2+) serves as cofactor.

Its subcellular location is the cytoplasm. The protein resides in the secreted. The protein localises to the cell surface. It catalyses the reaction (2R)-2-phosphoglycerate = phosphoenolpyruvate + H2O. The protein operates within carbohydrate degradation; glycolysis; pyruvate from D-glyceraldehyde 3-phosphate: step 4/5. Its function is as follows. Catalyzes the reversible conversion of 2-phosphoglycerate (2-PG) into phosphoenolpyruvate (PEP). It is essential for the degradation of carbohydrates via glycolysis. This chain is Enolase, found in Helicobacter pylori (strain Shi470).